The chain runs to 443 residues: Cobyrinate a,c-diamide synthase (443 aa).

The GATase cobBQ-type domain occupies 244–435 (KVSVAMDSAF…AHIHFLSNPR (192 aa)). C327 serves as the catalytic Nucleophile.

The protein belongs to the CobB/CbiA family. It depends on Mg(2+) as a cofactor.

The catalysed reaction is cob(II)yrinate + 2 L-glutamine + 2 ATP + 2 H2O = cob(II)yrinate a,c diamide + 2 L-glutamate + 2 ADP + 2 phosphate + 2 H(+). Its pathway is cofactor biosynthesis; adenosylcobalamin biosynthesis; cob(II)yrinate a,c-diamide from sirohydrochlorin (anaerobic route): step 10/10. Its function is as follows. Catalyzes the ATP-dependent amidation of the two carboxylate groups at positions a and c of cobyrinate, using either L-glutamine or ammonia as the nitrogen source. The sequence is that of Cobyrinate a,c-diamide synthase from Thermoplasma acidophilum (strain ATCC 25905 / DSM 1728 / JCM 9062 / NBRC 15155 / AMRC-C165).